We begin with the raw amino-acid sequence, 897 residues long: N-terminal acetyltransferase A complex auxiliary subunit NAA15 (897 aa).

TPR repeat units follow at residues 77–110 (HVCWHVLGLLYRSDREYREAIKCYRNALRIDPDN), 111–144 (LEILRDLSLLQAQMRDLSGFVETRQQLLTLKPNH), 189–222 (TEMILYKVSLLEESGSFDKALEELHKKEPKIVDK), 223–256 (LSYKEQEVSLLSKVGRLEEANKLYRVLLSMNPDN), 298–331 (SSAVKRIPLDFLQDENFKEAVAKYIKPLLTKGVP), 380–413 (LWTLFFLAQHYDRRGQYDVALCKIDEAIAHTPTV), and 488–523 (QCMWYDLASGDSYFRQGDLGRALKKFLAVEKHYADI). 2 disordered regions span residues 578–640 (KSTA…DPHG) and 863–897 (SRKSNENGDTPNHPMGQTELSDGQLEAFKSLSVAT). Residues 602–617 (KAEARAKKEAESKSEE) are compositionally biased toward basic and acidic residues. The segment covering 863–872 (SRKSNENGDT) has biased composition (polar residues).

Part of the NatA complex. Associates with ribosomes. Interacts with NAA10. Expressed in leaves, roots, shoots and flowers.

Its function is as follows. Auxiliary subunit of the NatA N-alpha-acetyltransferase complex. Required for male gametocyte development, embryogenesis, suspensor development and the formation of the quiescent center (QC) in the root meristem. Involved in plant immunity through the regulation of SNC1 stability. Required for embryo development. The protein is N-terminal acetyltransferase A complex auxiliary subunit NAA15 of Arabidopsis thaliana (Mouse-ear cress).